The chain runs to 171 residues: Protein-export protein SecB (171 aa).

It belongs to the SecB family. Homotetramer, a dimer of dimers. One homotetramer interacts with 1 SecA dimer.

It localises to the cytoplasm. One of the proteins required for the normal export of preproteins out of the cell cytoplasm. It is a molecular chaperone that binds to a subset of precursor proteins, maintaining them in a translocation-competent state. It also specifically binds to its receptor SecA. In Jannaschia sp. (strain CCS1), this protein is Protein-export protein SecB.